Here is a 473-residue protein sequence, read N- to C-terminus: ATP synthase subunit beta (473 aa).

ATP is bound at residue 158–165; it reads GGAGVGKT.

This sequence belongs to the ATPase alpha/beta chains family. In terms of assembly, F-type ATPases have 2 components, CF(1) - the catalytic core - and CF(0) - the membrane proton channel. CF(1) has five subunits: alpha(3), beta(3), gamma(1), delta(1), epsilon(1). CF(0) has three main subunits: a(1), b(2) and c(9-12). The alpha and beta chains form an alternating ring which encloses part of the gamma chain. CF(1) is attached to CF(0) by a central stalk formed by the gamma and epsilon chains, while a peripheral stalk is formed by the delta and b chains.

It localises to the cell membrane. It catalyses the reaction ATP + H2O + 4 H(+)(in) = ADP + phosphate + 5 H(+)(out). Its function is as follows. Produces ATP from ADP in the presence of a proton gradient across the membrane. The catalytic sites are hosted primarily by the beta subunits. The chain is ATP synthase subunit beta from Anoxybacillus flavithermus (strain DSM 21510 / WK1).